Reading from the N-terminus, the 153-residue chain is Probable histone H2A.2 (153 aa).

Disordered stretches follow at residues methionine 1 to valine 24 and lysine 127 to alanine 153. Positions lysine 127–serine 141 are enriched in basic and acidic residues. Basic residues predominate over residues proline 142–alanine 153. An SPKK motif motif is present at residues serine 149–lysine 152.

It belongs to the histone H2A family. In terms of assembly, the nucleosome is a histone octamer containing two molecules each of H2A, H2B, H3 and H4 assembled in one H3-H4 heterotetramer and two H2A-H2B heterodimers. The octamer wraps approximately 147 bp of DNA.

It is found in the nucleus. The protein resides in the chromosome. Functionally, core component of nucleosome. Nucleosomes wrap and compact DNA into chromatin, limiting DNA accessibility to the cellular machineries which require DNA as a template. Histones thereby play a central role in transcription regulation, DNA repair, DNA replication and chromosomal stability. DNA accessibility is regulated via a complex set of post-translational modifications of histones, also called histone code, and nucleosome remodeling. The chain is Probable histone H2A.2 from Medicago truncatula (Barrel medic).